Here is an 88-residue protein sequence, read N- to C-terminus: UPF0223 protein OB1419 (88 aa).

This sequence belongs to the UPF0223 family.

This Oceanobacillus iheyensis (strain DSM 14371 / CIP 107618 / JCM 11309 / KCTC 3954 / HTE831) protein is UPF0223 protein OB1419.